A 493-amino-acid chain; its full sequence is Transcription termination factor MTERF5, chloroplastic (493 aa).

The N-terminal 43 residues, 1–43, are a transit peptide targeting the chloroplast; it reads MQSLSQLGPSEIFLVARREKPSTRAQLWFTGRLSFRQETNGIR.

The protein belongs to the mTERF family. As to quaternary structure, interacts with pTAC6. In terms of tissue distribution, expressed in roots, rosette leaves, cauline leaves, stems, flower buds and open flowers.

It localises to the plastid. The protein resides in the chloroplast. Its function is as follows. Transcription termination factor required for processing and steady-state levels of plastid transcripts. Involved also in chloroplast transcriptional pausing, a general feature of chloroplast genes. Specifically and positively regulates the transcription of chloroplast psbEFLJ encoding for photosystem II (PSII) core subunits psbE, psbF, psbL and psbJ; causes the plastid-encoded RNA polymerase (PEP) complex to pause at psbEFLJ by binding to the +30 to +51 region of double-stranded DNA, and recruits additional pTAC6 to the transcriptionally paused region of psbEFLJ. May play a role in response to abiotic stresses. This Arabidopsis thaliana (Mouse-ear cress) protein is Transcription termination factor MTERF5, chloroplastic.